Here is a 43-residue protein sequence, read N- to C-terminus: Protein PsbN (43 aa).

The helical transmembrane segment at 4-24 (ATVLSITFAVILIAITGLAVY) threads the bilayer.

The protein belongs to the PsbN family.

The protein resides in the cellular thylakoid membrane. Functionally, may play a role in photosystem I and II biogenesis. In Synechocystis sp. (strain ATCC 27184 / PCC 6803 / Kazusa), this protein is Protein PsbN.